The sequence spans 352 residues: Beta-hexosaminidase (352 aa).

Residues D74, R82, R149, and K179–H180 each bind substrate. H192 acts as the Proton donor/acceptor in catalysis. Catalysis depends on D263, which acts as the Nucleophile.

Belongs to the glycosyl hydrolase 3 family. NagZ subfamily.

It is found in the cytoplasm. It carries out the reaction Hydrolysis of terminal non-reducing N-acetyl-D-hexosamine residues in N-acetyl-beta-D-hexosaminides.. It functions in the pathway cell wall biogenesis; peptidoglycan recycling. Its function is as follows. Plays a role in peptidoglycan recycling by cleaving the terminal beta-1,4-linked N-acetylglucosamine (GlcNAc) from peptide-linked peptidoglycan fragments, giving rise to free GlcNAc, anhydro-N-acetylmuramic acid and anhydro-N-acetylmuramic acid-linked peptides. This Bordetella pertussis (strain Tohama I / ATCC BAA-589 / NCTC 13251) protein is Beta-hexosaminidase.